Here is a 1118-residue protein sequence, read N- to C-terminus: Cytospin-A (1118 aa).

The interval 1–176 (MKKASRSVGS…SKSKSDNQIS (176 aa)) is disordered. Residues 29-52 (ESGSSLSAVTKLSKPGTSASLLKT) are compositionally biased toward polar residues. Over residues 79–119 (STCASTVSSTTGTTMSTLENKPRTVAGSTARRSTSSGTKES) the composition is skewed to low complexity. Basic and acidic residues-rich tracts occupy residues 120–131 (SSSRERIRDRSR) and 158–171 (TNPE…KSKS). A coiled-coil region spans residues 193–281 (KTKDVEILHL…LNALGFSLEQ (89 aa)). Disordered regions lie at residues 299–324 (ITAG…GSME) and 359–391 (SSDD…NASE). Residues 359–373 (SSDDALDAPSSSESE) show a composition bias toward low complexity. 2 coiled-coil regions span residues 396–450 (CLTE…MESL) and 488–808 (RYME…RGRV). Disordered regions lie at residues 856–879 (PSPA…PPAA) and 921–1002 (TSST…RKDP). The span at 937 to 946 (ESAKSISVSR) shows a compositional bias: low complexity. Basic and acidic residues predominate over residues 947-957 (RSSEEIKRDIS). Residues 972 to 991 (TTSPQLSLSSSPTASVTPTT) are compositionally biased toward low complexity. A Calponin-homology (CH) domain is found at 1012-1117 (GSKRNALLKW…YVTAIYKYFE (106 aa)).

This sequence belongs to the cytospin-A family. In terms of assembly, may interact with both microtubules and actin cytoskeleton.

It localises to the cytoplasm. Its subcellular location is the cytoskeleton. It is found in the spindle. The protein localises to the cell junction. The protein resides in the gap junction. Functionally, involved in cytokinesis and spindle organization. May play a role in actin cytoskeleton organization and microtubule stabilization and hence required for proper cell adhesion and migration. This Gallus gallus (Chicken) protein is Cytospin-A (SPECC1L).